A 165-amino-acid chain; its full sequence is Protein phosphatase 1 regulatory subunit 14C (165 aa).

Residues 1–12 (MSVATGSSETAG) show a composition bias toward low complexity. The segment at 1–73 (MSVATGSSET…QRRHQQGKVT (73 aa)) is disordered. The residue at position 2 (serine 2) is an N-acetylserine. Serine 25 carries the post-translational modification Phosphoserine. At arginine 27 the chain carries Omega-N-methylarginine. Residue serine 33 is modified to Phosphoserine. Positions 35–63 (GSSSGSGSSREDSAPVATAAAAGQVQQQQ) are enriched in low complexity. At threonine 73 the chain carries Phosphothreonine; by ILK1.

Belongs to the PP1 inhibitor family. Post-translationally, has over 600-fold higher inhibitory activity when phosphorylated, creating a molecular switch for regulating the phosphorylation status of PPP1CA substrates and smooth muscle contraction. The main inhibitory site appears to be Thr-73. In terms of tissue distribution, detected in breast cancer.

It localises to the cytoplasm. Its subcellular location is the membrane. Functionally, inhibitor of the PP1 regulatory subunit PPP1CA. In Homo sapiens (Human), this protein is Protein phosphatase 1 regulatory subunit 14C (PPP1R14C).